The following is a 381-amino-acid chain: 2-oxoglutarate-dependent dioxygenase FGSG_00048 (381 aa).

It belongs to the iron/ascorbate-dependent oxidoreductase family. Fe(2+) serves as cofactor.

Its pathway is mycotoxin biosynthesis. Its function is as follows. 2-oxoglutarate-dependent dioxygenase; part of the gene cluster that mediates the biosynthesis of gramillins A and B, bicyclic lipopeptides that induce cell death in maize leaves but not in wheat leaves. The nonribosomal peptide synthetase GRA1 incorporates respectively a glutamic adic (Glu), a leucine (Leu), a serine (Ser), a hydroxyglutamine (HOGln), a 2-amino decanoic acid, and 2 cysteins (CysB and CysA). The biosynthesis of 2-amino decanoic acid incorporated in gramillins could be initiated by a fatty acid synthase composed of the alpha and beta subunits FGSG_00036 and FGSG_11656. The cytochrome P450 monooxygenase FGSG_15680 could hydroxylate the fatty acid chain. Subsequent oxidation to the ketone by the oxidoreductase FGSG_00048 and transamination by aminotransferase FGSG_00049 could form 2-amino-decanoic acid. On the other hand, FGSG_15680 could also be responsible for the HO-modified glutamine at the gamma-position. Whether hydroxylation occurs on the fully assembled product or on the Gln residue prior to assembly into the gramillins requires further proof. The thioredoxin FGSG_00043 could also be required for the disulfide-bond formation between CysA and CysB. The specific involvement of the remaining proteins from the cluster is more difficult to discern, but could have broader regulatory (FGSG_00040 and FGSG_11657) or enzymatic functions (FGSG_00044 and FGSG_00045). The final C-domain of GRA1 does not possess the expected sequence of a termination CT domain, often implicated in macrocyclization and release of a cyclopeptidein fungal NRPs; and the thioesterase FGSG_00047 may act in concert with the terminal C-domain of GRA1 to catalyze the formation of the macrocyclic anhydride and release of the products. This is 2-oxoglutarate-dependent dioxygenase FGSG_00048 from Gibberella zeae (strain ATCC MYA-4620 / CBS 123657 / FGSC 9075 / NRRL 31084 / PH-1) (Wheat head blight fungus).